The sequence spans 379 residues: Mannan endo-1,4-beta-mannosidase 7 (379 aa).

Substrate contacts are provided by W64 and N179. The active-site Proton donor is E180. Substrate is bound at residue Y260. The active-site Nucleophile is E300. Substrate is bound at residue W342.

Belongs to the glycosyl hydrolase 5 (cellulase A) family. As to expression, expression not detected.

The catalysed reaction is Random hydrolysis of (1-&gt;4)-beta-D-mannosidic linkages in mannans, galactomannans and glucomannans.. In Oryza sativa subsp. japonica (Rice), this protein is Mannan endo-1,4-beta-mannosidase 7 (MAN7).